The following is a 156-amino-acid chain: Ribosomal RNA large subunit methyltransferase H (156 aa).

Residues L72, G104, and L123–L128 contribute to the S-adenosyl-L-methionine site.

It belongs to the RNA methyltransferase RlmH family. In terms of assembly, homodimer.

It is found in the cytoplasm. The enzyme catalyses pseudouridine(1915) in 23S rRNA + S-adenosyl-L-methionine = N(3)-methylpseudouridine(1915) in 23S rRNA + S-adenosyl-L-homocysteine + H(+). Functionally, specifically methylates the pseudouridine at position 1915 (m3Psi1915) in 23S rRNA. The chain is Ribosomal RNA large subunit methyltransferase H from Maridesulfovibrio salexigens (strain ATCC 14822 / DSM 2638 / NCIMB 8403 / VKM B-1763) (Desulfovibrio salexigens).